We begin with the raw amino-acid sequence, 200 residues long: dTTP/UTP pyrophosphatase (200 aa).

Residue D72 is the Proton acceptor of the active site.

It belongs to the Maf family. YhdE subfamily. Requires a divalent metal cation as cofactor.

The protein localises to the cytoplasm. It carries out the reaction dTTP + H2O = dTMP + diphosphate + H(+). It catalyses the reaction UTP + H2O = UMP + diphosphate + H(+). Functionally, nucleoside triphosphate pyrophosphatase that hydrolyzes dTTP and UTP. May have a dual role in cell division arrest and in preventing the incorporation of modified nucleotides into cellular nucleic acids. The sequence is that of dTTP/UTP pyrophosphatase from Pseudomonas savastanoi pv. phaseolicola (strain 1448A / Race 6) (Pseudomonas syringae pv. phaseolicola (strain 1448A / Race 6)).